Consider the following 307-residue polypeptide: Methionyl-tRNA formyltransferase (307 aa).

108-111 is a (6S)-5,6,7,8-tetrahydrofolate binding site; the sequence is SLLP.

This sequence belongs to the Fmt family.

It carries out the reaction L-methionyl-tRNA(fMet) + (6R)-10-formyltetrahydrofolate = N-formyl-L-methionyl-tRNA(fMet) + (6S)-5,6,7,8-tetrahydrofolate + H(+). Functionally, attaches a formyl group to the free amino group of methionyl-tRNA(fMet). The formyl group appears to play a dual role in the initiator identity of N-formylmethionyl-tRNA by promoting its recognition by IF2 and preventing the misappropriation of this tRNA by the elongation apparatus. The polypeptide is Methionyl-tRNA formyltransferase (Xanthomonas campestris pv. campestris (strain 8004)).